The chain runs to 354 residues: Nicotinate-nucleotide--dimethylbenzimidazole phosphoribosyltransferase (354 aa).

Glu-319 acts as the Proton acceptor in catalysis.

It belongs to the CobT family.

The enzyme catalyses 5,6-dimethylbenzimidazole + nicotinate beta-D-ribonucleotide = alpha-ribazole 5'-phosphate + nicotinate + H(+). It functions in the pathway nucleoside biosynthesis; alpha-ribazole biosynthesis; alpha-ribazole from 5,6-dimethylbenzimidazole: step 1/2. Catalyzes the synthesis of alpha-ribazole-5'-phosphate from nicotinate mononucleotide (NAMN) and 5,6-dimethylbenzimidazole (DMB). This Chlorobium chlorochromatii (strain CaD3) protein is Nicotinate-nucleotide--dimethylbenzimidazole phosphoribosyltransferase.